A 227-amino-acid chain; its full sequence is Cytochrome c oxidase subunit 2 (227 aa).

Over M1–S14 the chain is Mitochondrial intermembrane. A helical transmembrane segment spans residues P15–M45. Topologically, residues L46–Q59 are mitochondrial matrix. A helical membrane pass occupies residues E60–M87. The Mitochondrial intermembrane portion of the chain corresponds to D88–V227. Residues H161, C196, E198, C200, H204, and M207 each coordinate Cu cation. Position 198 (E198) interacts with Mg(2+). Y218 bears the Phosphotyrosine mark.

Belongs to the cytochrome c oxidase subunit 2 family. As to quaternary structure, component of the cytochrome c oxidase (complex IV, CIV), a multisubunit enzyme composed of 14 subunits. The complex is composed of a catalytic core of 3 subunits MT-CO1, MT-CO2 and MT-CO3, encoded in the mitochondrial DNA, and 11 supernumerary subunits COX4I, COX5A, COX5B, COX6A, COX6B, COX6C, COX7A, COX7B, COX7C, COX8 and NDUFA4, which are encoded in the nuclear genome. The complex exists as a monomer or a dimer and forms supercomplexes (SCs) in the inner mitochondrial membrane with NADH-ubiquinone oxidoreductase (complex I, CI) and ubiquinol-cytochrome c oxidoreductase (cytochrome b-c1 complex, complex III, CIII), resulting in different assemblies (supercomplex SCI(1)III(2)IV(1) and megacomplex MCI(2)III(2)IV(2)). Found in a complex with TMEM177, COA6, COX18, COX20, SCO1 and SCO2. Interacts with TMEM177 in a COX20-dependent manner. Interacts with COX20. Interacts with COX16. The cofactor is Cu cation.

The protein resides in the mitochondrion inner membrane. The catalysed reaction is 4 Fe(II)-[cytochrome c] + O2 + 8 H(+)(in) = 4 Fe(III)-[cytochrome c] + 2 H2O + 4 H(+)(out). Its function is as follows. Component of the cytochrome c oxidase, the last enzyme in the mitochondrial electron transport chain which drives oxidative phosphorylation. The respiratory chain contains 3 multisubunit complexes succinate dehydrogenase (complex II, CII), ubiquinol-cytochrome c oxidoreductase (cytochrome b-c1 complex, complex III, CIII) and cytochrome c oxidase (complex IV, CIV), that cooperate to transfer electrons derived from NADH and succinate to molecular oxygen, creating an electrochemical gradient over the inner membrane that drives transmembrane transport and the ATP synthase. Cytochrome c oxidase is the component of the respiratory chain that catalyzes the reduction of oxygen to water. Electrons originating from reduced cytochrome c in the intermembrane space (IMS) are transferred via the dinuclear copper A center (CU(A)) of subunit 2 and heme A of subunit 1 to the active site in subunit 1, a binuclear center (BNC) formed by heme A3 and copper B (CU(B)). The BNC reduces molecular oxygen to 2 water molecules using 4 electrons from cytochrome c in the IMS and 4 protons from the mitochondrial matrix. This Chrysocyon brachyurus (Maned wolf) protein is Cytochrome c oxidase subunit 2 (MT-CO2).